The following is an 888-amino-acid chain: Bifunctional lysine-specific demethylase and histidyl-hydroxylase NO66 (888 aa).

3 disordered regions span residues 83-157 (AAAK…GSFS), 187-208 (SNNS…DSDA), and 261-446 (NSTS…NKLS). The segment covering 98–108 (REKNIAKKQPE) has biased composition (basic and acidic residues). Residues 116 to 139 (ENVQKQLENGQENNGTLINLSNGK) are compositionally biased toward polar residues. The span at 192-207 (FDFDSDGDSNDFDDSD) shows a compositional bias: acidic residues. The span at 273–284 (VEPRKAAKRNEP) shows a compositional bias: basic and acidic residues. Residues 392 to 403 (KNKNNDNNNIDT) show a composition bias toward low complexity. Residues 404–429 (NNKKDANNKKDANNNKDINNKKDANN) are compositionally biased toward basic and acidic residues. Over residues 430–444 (NKDTNNNKDNNNKNK) the composition is skewed to low complexity. In terms of domain architecture, JmjC spans 564–709 (CSIRILNPST…NLLEVLMPSV (146 aa)). The Fe cation site is built by His-610, Asp-612, and His-675.

This sequence belongs to the ROX family. NO66 subfamily. The cofactor is Fe(2+).

Its subcellular location is the nucleus. The catalysed reaction is N(6),N(6)-dimethyl-L-lysyl(36)-[histone H3] + 2 2-oxoglutarate + 2 O2 = L-lysyl(36)-[histone H3] + 2 formaldehyde + 2 succinate + 2 CO2. In terms of biological role, oxygenase that can act as both a histone lysine demethylase and a ribosomal histidine hydroxylase. Specifically demethylates 'Lys-4' (H3K4me) and 'Lys-36' (H3K36me) of histone H3, thereby playing a central role in histone code. The polypeptide is Bifunctional lysine-specific demethylase and histidyl-hydroxylase NO66 (Drosophila mojavensis (Fruit fly)).